We begin with the raw amino-acid sequence, 63 residues long: Large ribosomal subunit protein bL32 (63 aa).

Over residues M1 to A18 the composition is skewed to basic residues. The tract at residues M1–P27 is disordered.

This sequence belongs to the bacterial ribosomal protein bL32 family.

The chain is Large ribosomal subunit protein bL32 from Chloroherpeton thalassium (strain ATCC 35110 / GB-78).